The primary structure comprises 331 residues: Glutamyl-tRNA reductase (331 aa).

Substrate is bound by residues 49–52 (TCNR), S107, 112–114 (EDQ), and Q118. The Nucleophile role is filled by C50. An NADP(+)-binding site is contributed by 184–189 (GNGEIG).

Belongs to the glutamyl-tRNA reductase family. In terms of assembly, homodimer.

It catalyses the reaction (S)-4-amino-5-oxopentanoate + tRNA(Glu) + NADP(+) = L-glutamyl-tRNA(Glu) + NADPH + H(+). Its pathway is porphyrin-containing compound metabolism; protoporphyrin-IX biosynthesis; 5-aminolevulinate from L-glutamyl-tRNA(Glu): step 1/2. In terms of biological role, catalyzes the NADPH-dependent reduction of glutamyl-tRNA(Glu) to glutamate 1-semialdehyde (GSA). The chain is Glutamyl-tRNA reductase from Acetivibrio thermocellus (strain ATCC 27405 / DSM 1237 / JCM 9322 / NBRC 103400 / NCIMB 10682 / NRRL B-4536 / VPI 7372) (Clostridium thermocellum).